A 199-amino-acid chain; its full sequence is Recombination protein RecR (199 aa).

The segment at 56 to 71 adopts a C4-type zinc-finger fold; that stretch reads CSICFNVSQDDQCRIC. A Toprim domain is found at 79–174; the sequence is SVLCVVEEYK…RVTRLASGLP (96 aa).

Belongs to the RecR family.

Its function is as follows. May play a role in DNA repair. It seems to be involved in an RecBC-independent recombinational process of DNA repair. It may act with RecF and RecO. This is Recombination protein RecR from Nocardioides sp. (strain ATCC BAA-499 / JS614).